Reading from the N-terminus, the 71-residue chain is Large ribosomal subunit protein uL29 (71 aa).

The protein belongs to the universal ribosomal protein uL29 family.

The chain is Large ribosomal subunit protein uL29 from Synechococcus sp. (strain RCC307).